Here is a 1537-residue protein sequence, read N- to C-terminus: Histone-lysine N-methyltransferase, H3 lysine-79 specific (1537 aa).

In terms of domain architecture, DOT1 spans 16–330 (EPAVYPWPLP…ILENYFSSLK (315 aa)). S-adenosyl-L-methionine is bound by residues 136–139 (YGET), 159–168 (FVDLGSGVGQ), E186, and 222–223 (DF). At S297 the chain carries Phosphoserine. Basic and acidic residues predominate over residues 334 to 350 (LREEQEAARRRQQRESK). Residues 334-467 (LREEQEAARR…SPFYQLPPSV (134 aa)) form a disordered region. S374 carries the phosphoserine modification. The required for interaction with nucleosomes and DNA stretch occupies residues 391–416 (PSKARKKKLNKKGRKMAGRKRGRPKK). Basic residues predominate over residues 393–416 (KARKKKLNKKGRKMAGRKRGRPKK). The segment covering 439–450 (QTVSQTAASSPQ) has biased composition (polar residues). Residues S448 and S471 each carry the phosphoserine modification. Residue T480 is modified to Phosphothreonine. S775 and S786 each carry phosphoserine. Disordered stretches follow at residues 785 to 853 (LSQD…LRER), 893 to 912 (RAER…DPSS), 957 to 1128 (TPGA…LNLN), and 1145 to 1243 (SPET…KWKS). Over residues 800–809 (LHSRAEHTKE) the composition is skewed to basic and acidic residues. Phosphoserine is present on S826. Phosphoserine; by MAPK11 is present on S834. The segment covering 844-853 (KSSEKGLRER) has biased composition (basic and acidic residues). 3 stretches are compositionally biased toward polar residues: residues 899–912 (STPS…DPSS), 966–986 (DESS…STPQ), and 994–1010 (PRNS…SSSP). T900 carries the post-translational modification Phosphothreonine; by MAPK11. Phosphoserine; by MAPK11 is present on S902. Phosphothreonine; by MAPK11 is present on T984. At S997 the chain carries Phosphoserine. Phosphoserine; by MAPK11 is present on residues S1001 and S1009. S1035 is modified (phosphoserine). Over residues 1048 to 1068 (TITTGAGSAKQSPSSKHSPLT) the composition is skewed to polar residues. S1093 is modified (phosphoserine). A Phosphoserine; by MAPK11 modification is found at S1104. A compositionally biased stretch (polar residues) spans 1118 to 1128 (TQPSGSPLNLN). Residues 1158-1171 (QDHDQPPVLKKERP) show a composition bias toward basic and acidic residues. Residues 1172 to 1184 (LSQTNGAHYSPLT) show a composition bias toward polar residues. The segment covering 1185-1195 (SDEEPGSEDEP) has biased composition (acidic residues). 2 positions are modified to phosphoserine: S1213 and S1246. Residues 1334–1410 (GASLPHKGPE…DKTPLLSGKA (77 aa)) are disordered.

The protein belongs to the class I-like SAM-binding methyltransferase superfamily. DOT1 family. In terms of assembly, interacts with MLLT10.

The protein localises to the nucleus. It carries out the reaction L-lysyl(79)-[histone H3] + 3 S-adenosyl-L-methionine = N(6),N(6),N(6)-trimethyl-L-lysyl(79)-[histone H3] + 3 S-adenosyl-L-homocysteine + 3 H(+). In terms of biological role, histone methyltransferase. Methylates 'Lys-79' of histone H3. Nucleosomes are preferred as substrate compared to free histones. Binds to DNA. In Homo sapiens (Human), this protein is Histone-lysine N-methyltransferase, H3 lysine-79 specific.